The sequence spans 315 residues: Transaldolase (315 aa).

The Schiff-base intermediate with substrate role is filled by Lys-131.

Belongs to the transaldolase family. Type 1 subfamily. In terms of assembly, homodimer.

Its subcellular location is the cytoplasm. It catalyses the reaction D-sedoheptulose 7-phosphate + D-glyceraldehyde 3-phosphate = D-erythrose 4-phosphate + beta-D-fructose 6-phosphate. The protein operates within carbohydrate degradation; pentose phosphate pathway; D-glyceraldehyde 3-phosphate and beta-D-fructose 6-phosphate from D-ribose 5-phosphate and D-xylulose 5-phosphate (non-oxidative stage): step 2/3. Transaldolase is important for the balance of metabolites in the pentose-phosphate pathway. The polypeptide is Transaldolase (Haemophilus ducreyi (strain 35000HP / ATCC 700724)).